Reading from the N-terminus, the 321-residue chain is Biotin synthase (321 aa).

The region spanning 44–273 (FCGNVFDLCT…DGFVRIAAGR (230 aa)) is the Radical SAM core domain. [4Fe-4S] cluster is bound by residues cysteine 62, cysteine 66, and cysteine 69. Residues serine 106, cysteine 138, cysteine 198, and arginine 268 each coordinate [2Fe-2S] cluster.

Belongs to the radical SAM superfamily. Biotin synthase family. Homodimer. The cofactor is [4Fe-4S] cluster. Requires [2Fe-2S] cluster as cofactor.

It catalyses the reaction (4R,5S)-dethiobiotin + (sulfur carrier)-SH + 2 reduced [2Fe-2S]-[ferredoxin] + 2 S-adenosyl-L-methionine = (sulfur carrier)-H + biotin + 2 5'-deoxyadenosine + 2 L-methionine + 2 oxidized [2Fe-2S]-[ferredoxin]. Its pathway is cofactor biosynthesis; biotin biosynthesis; biotin from 7,8-diaminononanoate: step 2/2. Its function is as follows. Catalyzes the conversion of dethiobiotin (DTB) to biotin by the insertion of a sulfur atom into dethiobiotin via a radical-based mechanism. In Akkermansia muciniphila (strain ATCC BAA-835 / DSM 22959 / JCM 33894 / BCRC 81048 / CCUG 64013 / CIP 107961 / Muc), this protein is Biotin synthase.